We begin with the raw amino-acid sequence, 180 residues long: uncharacterized protein (180 aa).

Positions 1-93 are disordered; that stretch reads MPSSVPKTSI…LPRRRNPGWV (93 aa). 2 stretches are compositionally biased toward low complexity: residues 9 to 25 and 47 to 64; these read SIESLGSPSSLSSSQAS and LTSSTESLGYLSSLSSSQ.

This is an uncharacterized protein from Homo sapiens (Human).